The following is a 139-amino-acid chain: ATP synthase epsilon chain (139 aa).

It belongs to the ATPase epsilon chain family. As to quaternary structure, F-type ATPases have 2 components, CF(1) - the catalytic core - and CF(0) - the membrane proton channel. CF(1) has five subunits: alpha(3), beta(3), gamma(1), delta(1), epsilon(1). CF(0) has three main subunits: a, b and c.

The protein resides in the cell inner membrane. In terms of biological role, produces ATP from ADP in the presence of a proton gradient across the membrane. The polypeptide is ATP synthase epsilon chain (Acinetobacter baumannii (strain SDF)).